Consider the following 232-residue polypeptide: Ribose-5-phosphate isomerase A (232 aa).

Residues 31 to 34 (TGST), 88 to 91 (DGAD), and 101 to 104 (KGGG) each bind substrate. Residue Glu-110 is the Proton acceptor of the active site. Lys-128 provides a ligand contact to substrate.

It belongs to the ribose 5-phosphate isomerase family. As to quaternary structure, homodimer.

It catalyses the reaction aldehydo-D-ribose 5-phosphate = D-ribulose 5-phosphate. Its pathway is carbohydrate degradation; pentose phosphate pathway; D-ribose 5-phosphate from D-ribulose 5-phosphate (non-oxidative stage): step 1/1. Functionally, catalyzes the reversible conversion of ribose-5-phosphate to ribulose 5-phosphate. The sequence is that of Ribose-5-phosphate isomerase A from Lactobacillus johnsonii (strain CNCM I-12250 / La1 / NCC 533).